The chain runs to 769 residues: Sensor histidine kinase ComP (769 aa).

Topologically, residues 1–9 (MKNLIKKFT) are cytoplasmic. A helical membrane pass occupies residues 10-33 (IAVIVLSILYISYTTYISMNGIII). The Extracellular segment spans residues 34 to 113 (GTKIHKNDKS…DFDLVTLNRP (80 aa)). The chain crosses the membrane as a helical span at residues 114 to 134 (YSFFLFVLPLFFYFLSIICIF). The Cytoplasmic segment spans residues 135-144 (YILKVNKKRR). A helical membrane pass occupies residues 145–167 (SFAAYILILLLLDISIAYISAGG). Over 168–235 (PFRGHIINRY…QDYLQVDIDF (68 aa)) the chain is Extracellular. A helical transmembrane segment spans residues 236–257 (LATLNLVSFATLTLFSFSAIYL). At 258–272 (HLNKYKYAEHSFILK) the chain is on the cytoplasmic side. A helical transmembrane segment spans residues 273-295 (LLILTNTLSFAPFLIFFVLPIIF). Residues 296 to 299 (TGNY) are Extracellular-facing. Residues 300–323 (IFPALASASLLVLIPFGLVYQFVA) form a helical membrane-spanning segment. Topologically, residues 324–337 (NKMFDIEFILGRMR) are cytoplasmic. Residues 338-357 (YYALLAMIPTLLIVGALVLF) form a helical membrane-spanning segment. Residues 358–361 (DVMD) are Extracellular-facing. A helical transmembrane segment spans residues 362-383 (IQMNPVRQTVFFFVVMFAVFYF). The Cytoplasmic portion of the chain corresponds to 384 to 769 (KEVMDFKFRL…GFKADIEIEL (386 aa)). Positions 571–769 (LARDLHDSVL…GFKADIEIEL (199 aa)) constitute a Histidine kinase domain. Residue His-576 is modified to Phosphohistidine; by autocatalysis.

Post-translationally, autophosphorylates on a histidine and transfers the phosphate group onto an aspartate in ComA, thus activating it.

It localises to the cell membrane. It catalyses the reaction ATP + protein L-histidine = ADP + protein N-phospho-L-histidine.. Functionally, sensor in the two-component regulatory system ComP/ComA involved in a major quorum response pathway that regulates the development of genetic competence. Plays a role in sporulation, at least partly interchangeable with that of SpoIIJ. Probably activates ComA by phosphorylation. This Bacillus subtilis (strain 168) protein is Sensor histidine kinase ComP (comP).